The sequence spans 349 residues: MGRTLRVAILGATGYTGGELIRLLHRHPGAELSFVSSERFAGQSIAKVYTHLQAVGHLICQPMDAKKACEAADFIFCALPHVTSMEVVPELLQRGAKVVDLSADFRLKSAETYAHWYGTQHLAPELLPQAAYGLPELFRESIKGANLVANPGCYPTSVQLPLFPLLQEGMIDPALVIADSKSGVSGAGRSPAQGTLFAELSEGFKAYKVEAHRHIPEMEQNLALAAGKEIKIRFTPHLLPQSRGILSTCYLRPTSGVNAQRVRDTLMTRYRDEPFVTVLPHGDMPATSDVRGSNACHMGVTEDLRSGWLIIVSVIDNLVKGASGAAVQNFNLMTGWDETTALDSLPMFP.

Cys-153 is an active-site residue.

This sequence belongs to the NAGSA dehydrogenase family. Type 1 subfamily.

The protein resides in the cytoplasm. The enzyme catalyses N-acetyl-L-glutamate 5-semialdehyde + phosphate + NADP(+) = N-acetyl-L-glutamyl 5-phosphate + NADPH + H(+). Its pathway is amino-acid biosynthesis; L-arginine biosynthesis; N(2)-acetyl-L-ornithine from L-glutamate: step 3/4. Functionally, catalyzes the NADPH-dependent reduction of N-acetyl-5-glutamyl phosphate to yield N-acetyl-L-glutamate 5-semialdehyde. In Magnetococcus marinus (strain ATCC BAA-1437 / JCM 17883 / MC-1), this protein is N-acetyl-gamma-glutamyl-phosphate reductase.